A 254-amino-acid polypeptide reads, in one-letter code: Ubiquinone biosynthesis O-methyltransferase (254 aa).

Arg-47, Gly-76, Asp-97, and Leu-141 together coordinate S-adenosyl-L-methionine.

The protein belongs to the methyltransferase superfamily. UbiG/COQ3 family.

It catalyses the reaction a 3-demethylubiquinol + S-adenosyl-L-methionine = a ubiquinol + S-adenosyl-L-homocysteine + H(+). The catalysed reaction is a 3-(all-trans-polyprenyl)benzene-1,2-diol + S-adenosyl-L-methionine = a 2-methoxy-6-(all-trans-polyprenyl)phenol + S-adenosyl-L-homocysteine + H(+). Its pathway is cofactor biosynthesis; ubiquinone biosynthesis. O-methyltransferase that catalyzes the 2 O-methylation steps in the ubiquinone biosynthetic pathway. This Maricaulis maris (strain MCS10) (Caulobacter maris) protein is Ubiquinone biosynthesis O-methyltransferase.